A 285-amino-acid chain; its full sequence is Stress response regulator protein 1 (285 aa).

2 stretches are compositionally biased toward low complexity: residues 43 to 58 (DTSS…SSNN) and 128 to 138 (SIISSKSSNKS). Disordered stretches follow at residues 43–66 (DTSS…SDQQ) and 114–142 (PLTP…TTVV). Positions 158–276 (SFLIVDDNII…LDFMANSIDD (119 aa)) constitute a Response regulatory domain. Asp209 is modified (4-aspartylphosphate).

In terms of biological role, required for stress adaptation, morphogenesis and virulence. The protein is Stress response regulator protein 1 (SRR1) of Candida dubliniensis (strain CD36 / ATCC MYA-646 / CBS 7987 / NCPF 3949 / NRRL Y-17841) (Yeast).